The sequence spans 328 residues: tRNA uridine(34) hydroxylase (328 aa).

A Rhodanese domain is found at 130–224; that stretch reads LDEDTVVLDT…YGKDPEVQGE (95 aa). Catalysis depends on C184, which acts as the Cysteine persulfide intermediate.

The protein belongs to the TrhO family.

It catalyses the reaction uridine(34) in tRNA + AH2 + O2 = 5-hydroxyuridine(34) in tRNA + A + H2O. Catalyzes oxygen-dependent 5-hydroxyuridine (ho5U) modification at position 34 in tRNAs. The sequence is that of tRNA uridine(34) hydroxylase from Streptococcus pyogenes serotype M28 (strain MGAS6180).